Reading from the N-terminus, the 145-residue chain is UPF0310 protein PH1033 (145 aa).

The protein belongs to the UPF0310 family.

In Pyrococcus horikoshii (strain ATCC 700860 / DSM 12428 / JCM 9974 / NBRC 100139 / OT-3), this protein is UPF0310 protein PH1033.